A 1372-amino-acid polypeptide reads, in one-letter code: DNA-directed RNA polymerase subunit beta' (1372 aa).

Zn(2+) is bound by residues Cys-69, Cys-71, Cys-84, and Cys-87. Positions 460, 462, and 464 each coordinate Mg(2+). Positions 808, 882, 889, and 892 each coordinate Zn(2+).

It belongs to the RNA polymerase beta' chain family. The RNAP catalytic core consists of 2 alpha, 1 beta, 1 beta' and 1 omega subunit. When a sigma factor is associated with the core the holoenzyme is formed, which can initiate transcription. It depends on Mg(2+) as a cofactor. The cofactor is Zn(2+).

It catalyses the reaction RNA(n) + a ribonucleoside 5'-triphosphate = RNA(n+1) + diphosphate. Its function is as follows. DNA-dependent RNA polymerase catalyzes the transcription of DNA into RNA using the four ribonucleoside triphosphates as substrates. The protein is DNA-directed RNA polymerase subunit beta' of Rickettsia conorii (strain ATCC VR-613 / Malish 7).